The following is a 240-amino-acid chain: Phosphatidylserine decarboxylase proenzyme (240 aa).

The active-site Schiff-base intermediate with substrate; via pyruvic acid is the Ser-198. A Pyruvic acid (Ser); by autocatalysis modification is found at Ser-198.

Belongs to the phosphatidylserine decarboxylase family. PSD-A subfamily. In terms of assembly, heterodimer of a large membrane-associated beta subunit and a small pyruvoyl-containing alpha subunit. Pyruvate is required as a cofactor. In terms of processing, is synthesized initially as an inactive proenzyme. Formation of the active enzyme involves a self-maturation process in which the active site pyruvoyl group is generated from an internal serine residue via an autocatalytic post-translational modification. Two non-identical subunits are generated from the proenzyme in this reaction, and the pyruvate is formed at the N-terminus of the alpha chain, which is derived from the carboxyl end of the proenzyme. The post-translation cleavage follows an unusual pathway, termed non-hydrolytic serinolysis, in which the side chain hydroxyl group of the serine supplies its oxygen atom to form the C-terminus of the beta chain, while the remainder of the serine residue undergoes an oxidative deamination to produce ammonia and the pyruvoyl prosthetic group on the alpha chain.

It localises to the cell membrane. The enzyme catalyses a 1,2-diacyl-sn-glycero-3-phospho-L-serine + H(+) = a 1,2-diacyl-sn-glycero-3-phosphoethanolamine + CO2. It participates in phospholipid metabolism; phosphatidylethanolamine biosynthesis; phosphatidylethanolamine from CDP-diacylglycerol: step 2/2. Functionally, catalyzes the formation of phosphatidylethanolamine (PtdEtn) from phosphatidylserine (PtdSer). This Paramagnetospirillum magneticum (strain ATCC 700264 / AMB-1) (Magnetospirillum magneticum) protein is Phosphatidylserine decarboxylase proenzyme.